We begin with the raw amino-acid sequence, 489 residues long: MSIDLNWEAATSGPDGEQLAERIRCFIHDKFQQVPLPRFIRSVNVHSFEFGSIAPELEIKDICDPFVDFYEESDSEDEDEGHEDIQSDASSDRAAADKRGMRYRHDNNGHDEHGTNHHDHLRTSQWVTGEIDGHHQSAQSPLRSPIGLGDHLNAQFRSTTPNILPGVTSNLGYHLMMGNLSGTQTPLVAVAGGGTPFGTGWPDAVMHGGSQLAGQPHGRGRGREENNNNNLDTGSPSRPSTANTNPTQLSHGQSAAGSSSNNTSNDPTVIYNDHASSTTATAHGLHEGREKQAPTSIIDQESPPSPTPHMRERRPEDFQVICRVKYAGDVKLSLTAEILLDYPMPSFVGLPLKLNITGITFDGVAVVAYIRRRAHLCFLSPEDADALLGDEEEDINHQQRQQQQQQHPYPTTNTSESINNNNPETHPPQPRRRFGSLLQQIRVDSEIGRKENGKQALKNVGKVERFVLDQVRRIFEDEFVFPSFWTFLV.

The region spanning 1–489 is the SMP-LTD domain; it reads MSIDLNWEAA…VFPSFWTFLV (489 aa). Over residues 72–82 the composition is skewed to acidic residues; it reads ESDSEDEDEGH. 3 disordered regions span residues 72–97, 201–313, and 394–432; these read ESDS…AAAD, WPDA…MRER, and DINH…QPRR. Polar residues predominate over residues 231–249; sequence LDTGSPSRPSTANTNPTQL. 2 stretches are compositionally biased toward low complexity: residues 250-265 and 398-424; these read SHGQ…NTSN and QQRQ…NNPE.

This sequence belongs to the MDM12 family. Component of the ER-mitochondria encounter structure (ERMES) or MDM complex, composed of MMM1, MDM10, mdm12 and MDM34. An MMM1 homodimer associates with one molecule of mdm12 on each side in a pairwise head-to-tail manner, and the SMP-LTD domains of MMM1 and mdm12 generate a continuous hydrophobic tunnel for phospholipid trafficking.

The protein localises to the mitochondrion outer membrane. It localises to the endoplasmic reticulum membrane. Component of the ERMES/MDM complex, which serves as a molecular tether to connect the endoplasmic reticulum (ER) and mitochondria. Components of this complex are involved in the control of mitochondrial shape and protein biogenesis, and function in nonvesicular lipid trafficking between the ER and mitochondria. mdm12 is required for the interaction of the ER-resident membrane protein MMM1 and the outer mitochondrial membrane-resident beta-barrel protein MDM10. The mdm12-MMM1 subcomplex functions in the major beta-barrel assembly pathway that is responsible for biogenesis of all mitochondrial outer membrane beta-barrel proteins, and acts in a late step after the SAM complex. The MDM10-mdm12-MMM1 subcomplex further acts in the TOM40-specific pathway after the action of the mdm12-MMM1 complex. Essential for establishing and maintaining the structure of mitochondria and maintenance of mtDNA nucleoids. In Talaromyces marneffei (strain ATCC 18224 / CBS 334.59 / QM 7333) (Penicillium marneffei), this protein is Mitochondrial distribution and morphology protein 12.